A 578-amino-acid chain; its full sequence is Membrane protein insertase YidC (578 aa).

A helical transmembrane segment spans residues 7–27; that stretch reads FLAIAISLGILLGFQGLYRHF. A disordered region spans residues 35–70; the sequence is ARTATNAGQGKPNNTLGAVPTDATASQSPPPKEGAR. The segment covering 37–50 has biased composition (polar residues); the sequence is TATNAGQGKPNNTL. The next 4 helical transmembrane spans lie at 362–382, 436–456, 491–511, and 530–550; these read LVGN…AAFY, LPML…FVTI, HISP…TMYL, and FMPI…VIYW.

It belongs to the OXA1/ALB3/YidC family. Type 1 subfamily. In terms of assembly, interacts with the Sec translocase complex via SecD. Specifically interacts with transmembrane segments of nascent integral membrane proteins during membrane integration.

It is found in the cell inner membrane. Its function is as follows. Required for the insertion and/or proper folding and/or complex formation of integral membrane proteins into the membrane. Involved in integration of membrane proteins that insert both dependently and independently of the Sec translocase complex, as well as at least some lipoproteins. Aids folding of multispanning membrane proteins. The polypeptide is Membrane protein insertase YidC (Granulibacter bethesdensis (strain ATCC BAA-1260 / CGDNIH1)).